The chain runs to 319 residues: HPr kinase/phosphorylase (319 aa).

Catalysis depends on residues histidine 144 and lysine 165. 159–166 (GKSGIGKS) contacts ATP. Serine 166 is a Mg(2+) binding site. Catalysis depends on aspartate 183, which acts as the Proton acceptor; for phosphorylation activity. Proton donor; for dephosphorylation activity. The tract at residues 207–216 (MEIRGLGVIN) is important for the catalytic mechanism of both phosphorylation and dephosphorylation. Glutamate 208 contributes to the Mg(2+) binding site. The active site involves arginine 249. Residues 270-275 (PVRPGR) are important for the catalytic mechanism of dephosphorylation.

The protein belongs to the HPrK/P family. As to quaternary structure, homohexamer. Mg(2+) is required as a cofactor.

It carries out the reaction [HPr protein]-L-serine + ATP = [HPr protein]-O-phospho-L-serine + ADP + H(+). It catalyses the reaction [HPr protein]-O-phospho-L-serine + phosphate + H(+) = [HPr protein]-L-serine + diphosphate. Its function is as follows. Catalyzes the ATP- as well as the pyrophosphate-dependent phosphorylation of a specific serine residue in HPr, a phosphocarrier protein of the phosphoenolpyruvate-dependent sugar phosphotransferase system (PTS). HprK/P also catalyzes the pyrophosphate-producing, inorganic phosphate-dependent dephosphorylation (phosphorolysis) of seryl-phosphorylated HPr (P-Ser-HPr). This Geobacter sulfurreducens (strain ATCC 51573 / DSM 12127 / PCA) protein is HPr kinase/phosphorylase.